The following is a 352-amino-acid chain: Putative DNA relaxase NicK (352 aa).

The protein belongs to the plasmid replication initiation factor family.

Its function is as follows. Probable DNA relaxase involved in the transfer of the integrative and conjugative element ICEBs1. Required for the transfer of ICEBs1. Probably mediates conjugation of ICEBs1 by nicking at oriT on the conjugative element and facilitates the translocation of a single strand of ICEBs1 DNA through a transmembrane conjugation pore into the recipient cell. The sequence is that of Putative DNA relaxase NicK (nicK) from Bacillus subtilis (strain 168).